Consider the following 37-residue polypeptide: Large ribosomal subunit protein bL36 (37 aa).

This sequence belongs to the bacterial ribosomal protein bL36 family.

The chain is Large ribosomal subunit protein bL36 from Desulforamulus reducens (strain ATCC BAA-1160 / DSM 100696 / MI-1) (Desulfotomaculum reducens).